The chain runs to 436 residues: Methylenetetrahydrofolate--tRNA-(uracil-5-)-methyltransferase TrmFO (436 aa).

7 to 12 (GAGLAG) is an FAD binding site.

Belongs to the MnmG family. TrmFO subfamily. The cofactor is FAD.

It is found in the cytoplasm. It catalyses the reaction uridine(54) in tRNA + (6R)-5,10-methylene-5,6,7,8-tetrahydrofolate + NADH + H(+) = 5-methyluridine(54) in tRNA + (6S)-5,6,7,8-tetrahydrofolate + NAD(+). The enzyme catalyses uridine(54) in tRNA + (6R)-5,10-methylene-5,6,7,8-tetrahydrofolate + NADPH + H(+) = 5-methyluridine(54) in tRNA + (6S)-5,6,7,8-tetrahydrofolate + NADP(+). Its function is as follows. Catalyzes the folate-dependent formation of 5-methyl-uridine at position 54 (M-5-U54) in all tRNAs. The polypeptide is Methylenetetrahydrofolate--tRNA-(uracil-5-)-methyltransferase TrmFO (Caldicellulosiruptor bescii (strain ATCC BAA-1888 / DSM 6725 / KCTC 15123 / Z-1320) (Anaerocellum thermophilum)).